The primary structure comprises 545 residues: Hydroxylamine reductase (545 aa).

The [4Fe-4S] cluster site is built by cysteine 7, cysteine 10, cysteine 19, and cysteine 25. 8 residues coordinate hybrid [4Fe-2O-2S] cluster: histidine 241, glutamate 265, cysteine 309, cysteine 400, cysteine 428, cysteine 453, glutamate 488, and lysine 490. Cysteine persulfide; in oxidized form is present on cysteine 400.

The protein belongs to the HCP family. In terms of assembly, monomer. It depends on [4Fe-4S] cluster as a cofactor. Hybrid [4Fe-2O-2S] cluster is required as a cofactor.

It is found in the cytoplasm. It catalyses the reaction A + NH4(+) + H2O = hydroxylamine + AH2 + H(+). Catalyzes the reduction of hydroxylamine to form NH(3) and H(2)O. The sequence is that of Hydroxylamine reductase from Desulfovibrio desulfuricans (strain ATCC 27774 / DSM 6949 / MB).